A 191-amino-acid chain; its full sequence is Photosystem I assembly protein Ycf4 (191 aa).

2 consecutive transmembrane segments (helical) span residues 33-53 (LLAVIVTIGGLGFTLTCLSSY) and 74-94 (LVMGLYGIAGLLLASYLWAMI).

Belongs to the Ycf4 family.

The protein resides in the cellular thylakoid membrane. Seems to be required for the assembly of the photosystem I complex. In Prochlorococcus marinus (strain MIT 9303), this protein is Photosystem I assembly protein Ycf4.